A 98-amino-acid polypeptide reads, in one-letter code: Venom toxin OcyC11 (98 aa).

Positions 1 to 20 are cleaved as a signal peptide; sequence MKIACTLVLFVMLRCYVNAR.

Post-translationally, contains 4 disulfide bonds. Expressed by the venom gland.

Its subcellular location is the secreted. The chain is Venom toxin OcyC11 from Opisthacanthus cayaporum (South American scorpion).